The primary structure comprises 309 residues: Homoserine O-succinyltransferase (309 aa).

The Acyl-thioester intermediate role is filled by Cys142. Substrate contacts are provided by Lys163 and Ser192. His235 acts as the Proton acceptor in catalysis. Glu237 is an active-site residue. Arg249 contacts substrate.

This sequence belongs to the MetA family. Homodimer.

The protein localises to the cytoplasm. The enzyme catalyses L-homoserine + succinyl-CoA = O-succinyl-L-homoserine + CoA. It participates in amino-acid biosynthesis; L-methionine biosynthesis via de novo pathway; O-succinyl-L-homoserine from L-homoserine: step 1/1. Transfers a succinyl group from succinyl-CoA to L-homoserine, forming succinyl-L-homoserine. The sequence is that of Homoserine O-succinyltransferase from Escherichia coli O139:H28 (strain E24377A / ETEC).